A 150-amino-acid polypeptide reads, in one-letter code: UPF0039 protein C11D3.02c (150 aa).

The region spanning 9–150 (KYFNSLDVKE…IPHVEMRLEL (142 aa)) is the N-acetyltransferase domain.

It belongs to the UPF0039 (ElaA) family.

In Schizosaccharomyces pombe (strain 972 / ATCC 24843) (Fission yeast), this protein is UPF0039 protein C11D3.02c.